A 707-amino-acid polypeptide reads, in one-letter code: Early transcription factor 82 kDa subunit (707 aa).

The protein belongs to the poxviridae VETF large subunit family. Heterodimer of a 70 kDa and a 82 kDa subunit. Part of the early transcription complex composed of ETF, RAP94, and the DNA-directed RNA polymerase.

Its subcellular location is the virion. Its function is as follows. Acts with RNA polymerase to initiate transcription from early gene promoters. Is recruited by the RPO-associated protein of 94 kDa (RAP94) to form the early transcription complex, which also contains the core RNA polymerase. ETF heterodimer binds to early gene promoters. This is Early transcription factor 82 kDa subunit (VETFL) from Molluscum contagiosum virus subtype 1 (MOCV).